A 440-amino-acid polypeptide reads, in one-letter code: Oligodendrocyte-myelin glycoprotein (440 aa).

A signal peptide spans 1–24 (MEYQILKMSLCLFILLFLTPGILC). An LRRNT domain is found at 25–55 (ICPLQCICTERHRHVDCSGRNLSTLPSGLQE). N-linked (GlcNAc...) asparagine glycans are attached at residues N45 and N61. LRR repeat units lie at residues 56 to 77 (NIIH…LTQY), 79 to 100 (NLRT…LPRS), 101 to 121 (LWNM…DTAY), 124 to 145 (NLKY…KNTL), 147 to 168 (SLEV…MPSK), 169 to 189 (LHIV…TLIN), 192 to 213 (NLTH…SFDQ), and 216 to 239 (QLQE…TYLL). N103 is a glycosylation site (N-linked (GlcNAc...) asparagine). 5 N-linked (GlcNAc...) asparagine glycosylation sites follow: N152, N176, N189, N192, and N234. Ser/Thr-rich repeat units follow at residues 229–270 (CDHK…YPTP), 271–292 (SGFT…INSL), 293–335 (SVVT…VPYP), 336–377 (EDTS…SPTP), and 378–416 (MTLS…TPLP). 2 N-linked (GlcNAc...) asparagine glycosylation sites follow: N364 and N389. S417 is lipidated: GPI-anchor amidated serine. A propeptide spans 418–440 (VANAWKVNASFLLLLNVVVMLAV) (removed in mature form). A glycan (N-linked (GlcNAc...) asparagine) is linked at N425.

In terms of assembly, binds to RTN4R. In terms of processing, O-glycosylated in its Ser/Thr-rich repeat domain. Oligodendrocytes and myelin of the central nervous system.

Its subcellular location is the cell membrane. Its function is as follows. Cell adhesion molecule contributing to the interactive process required for myelination in the central nervous system. The chain is Oligodendrocyte-myelin glycoprotein (OMG) from Homo sapiens (Human).